Here is a 162-residue protein sequence, read N- to C-terminus: UPF0262 protein Pden_1958 (162 aa).

The segment at 1 to 22 is disordered; that stretch reads MSQSANRLCRIDIDDSALPPPS.

Belongs to the UPF0262 family.

The protein is UPF0262 protein Pden_1958 of Paracoccus denitrificans (strain Pd 1222).